Reading from the N-terminus, the 317-residue chain is METANYYLPSPPYSSTSSSDSRESRMNTPIPTTYSEENVNSLFHLMPDNTDQWMTSQKNFWQEGSPSSSEYLHQQAVQPSQQARLPGISNFMKDSQLSVKPAAYYCSPTMNDYRVEKVANTLLDPYVQLDQPTYADFTNAQVLNHQQEMLQMNFPTPLSTSYMNTAQVTQTHQMPFNIFELNLSNFATFQPACDTPLPLLNSSPTHPYTTMSNFTPPPQDPLVAEPKPMKKRMAAVQCHQNSICSNCKTRETTLWRRNGEGGVECNACNLYFRKNNRKRPLSLRKDGIMKRNRRPRNESPNSAIRNTHQRHGHAAAC.

Residues 1–34 (METANYYLPSPPYSSTSSSDSRESRMNTPIPTTY) are disordered. A GATA-type zinc finger spans residues 244–268 (CSNCKTRETTLWRRNGEGGVECNAC). The tract at residues 290-317 (KRNRRPRNESPNSAIRNTHQRHGHAAAC) is disordered. Residues 307-317 (THQRHGHAAAC) show a composition bias toward basic residues.

Interacts with skn-1; interaction may enhance transcriptional activation of target genes. As to expression, expressed in head, trunk and tail. Expression decreases with age in the hypodermal cells and the pharyngeal-intestinal valve cells in the head, eventually showing little or no expression in about 14 day old worms. Expressed in hypodermal, but not in intestinal, cells at 1 day of age. Expression in the hypodermal and intestinal cells in the trunk region decreases quickly between day 3 and day 5 of adulthood. Expression in the tail between days 3 and 14 stays approximately uniform.

The protein localises to the nucleus. Its function is as follows. Transcription factor. Required, in concert with signal transducer and transcription factor sta-2, for up-regulation of the vacuolar H(+)-ATPase and acceleration of lysosome maturation at molt. Involved in regulating hypodermal development, perhaps acting downstream of transcription factor elt-1. Modulates environmentally induced changes in collagen gene expression, including rol-6, sqt-1, lon-3, and dpy-13. Involved in regulating expression of various genes, including gst-4, sod-3, ugt-9, and col-144. In response to oxidative stress, required to up-regulate expression of gst-4 mRNA. Regulated by the Insulin/IGF-1-like signaling (IIS) mediated pathway. Plays a role in longevity. May regulate the expression of genes that control sensitivity to osmotic stress, in conjunction with the GATA region-binding transcription factor elt-2. May form a transcriptional circuit with GATA factors egl-18 and elt-6. The sequence is that of Transcription factor elt-3 from Caenorhabditis elegans.